We begin with the raw amino-acid sequence, 309 residues long: MLGKGGKRKFDEHEDGLEGKIVSPSDGPSRVSYTLQRQTIFNISLMKLYNHRPLTEPSLQKTVLINNMLRRIQEELKQEGSLRPAFTPSSQPSNSLSDSYQEAPPPAPHPCDLGSTTPLEACLTPASLLEDDNDDTFCTLQAVHPAAPTRLSSAALPAEKDSFSSALDEIEELCPTSTSTEAAHTAAPEGPKGTSSESSVQKPEGPEEGRTDDSRFMDSLPGNFEITTSTGFLTDLTLDDILFADIDTSMYDFDPCTSASGTASKMAPVSADDLLKTLAPYSNQPVAPSQPFKMDLTELDHIMEVLVGS.

Disordered regions lie at residues 1–30 (MLGKGGKRKFDEHEDGLEGKIVSPSDGPSR), 79–114 (EGSLRPAFTPSSQPSNSLSDSYQEAPPPAPHPCDLG), and 175–220 (PTST…MDSL). Over residues 8–18 (RKFDEHEDGLE) the composition is skewed to basic and acidic residues. In terms of domain architecture, SERTA spans 33–80 (YTLQRQTIFNISLMKLYNHRPLTEPSLQKTVLINNMLRRIQEELKQEG). Low complexity-rich tracts occupy residues 89-99 (SSQPSNSLSDS) and 175-189 (PTSTSTEAAHTAAPE). Residues 204-216 (EGPEEGRTDDSRF) show a composition bias toward basic and acidic residues. The required for transactivation activity stretch occupies residues 230 to 306 (TGFLTDLTLD…TELDHIMEVL (77 aa)). The Nuclear export signal (NES) signature appears at 233–238 (LTDLTL).

In terms of assembly, interacts with XPO1; which mediates nuclear export. Interacts with TFDP1; modulates transactivation activity of TFDP1/E2F complexes. In terms of processing, polyubiquitinated, which promotes proteasomal degradation. Expressed in white and brown adipose tissue.

It localises to the nucleus. Its subcellular location is the cytoplasm. Functionally, acts at E2F-responsive promoters as coregulator to integrate signals provided by PHD- and/or bromodomain-containing transcription factors. May act as coactivator as well as corepressor of E2F1-TFDP1 and E2F4-TFDP1 complexes on E2F consensus binding sites, which would activate or inhibit E2F-target genes expression. Modulates fat storage by down-regulating the expression of key genes involved in adipocyte lipolysis, thermogenesis and oxidative metabolism. The chain is SERTA domain-containing protein 2 (Sertad2) from Mus musculus (Mouse).